A 472-amino-acid polypeptide reads, in one-letter code: Estrogen receptor beta (472 aa).

Positions 1–104 (MAFCSPAMMN…NPGSKRDAHF (104 aa)) are modulating. NR C4-type zinc fingers lie at residues 105-125 (CAVC…CEGC) and 141-165 (CPAT…LRKC). Positions 105-170 (CAVCSDYASG…RLRKCYEVGM (66 aa)) form a DNA-binding region, nuclear receptor. In terms of domain architecture, NR LBD spans 217 to 449 (SPEQFVLTLL…DLLLEMLNAH (233 aa)).

The protein belongs to the nuclear hormone receptor family. NR3 subfamily. Binds DNA as a homodimer. Can form a heterodimer with ER-alpha. In terms of tissue distribution, a high expression is seen in the telencephalon, diencephalon, pituitary, testis and kidneys but little or no expression is seen in the cerebellum, pectoral muscle and adrenal gland.

The protein resides in the nucleus. Functionally, binds estrogens with an affinity similar to that of ER-alpha, and activates expression of reporter genes containing estrogen response elements (ERE) in an estrogen-dependent manner. In Coturnix japonica (Japanese quail), this protein is Estrogen receptor beta (ESR2).